Here is a 1074-residue protein sequence, read N- to C-terminus: DNA primase (1074 aa).

Residues 1012–1052 (CVRFKHARARRASARSYLALNVDAHGRLCVCVIQQCFAAKC) form a CHC2-type zinc finger.

It belongs to the herpesviridae DNA primase family. In terms of assembly, associates with the helicase and the primase-associated factor to form the helicase-primase factor.

The protein localises to the host nucleus. Functionally, essential component of the helicase/primase complex. Unwinds the DNA at the replication forks and generates single-stranded DNA for both leading and lagging strand synthesis. The primase initiates primer synthesis and thereby produces large amount of short RNA primers on the lagging strand that the polymerase elongates using dNTPs. The chain is DNA primase (MDV066) from Gallus gallus (Chicken).